We begin with the raw amino-acid sequence, 882 residues long: HTH-type transcriptional regulator AlkS (882 aa).

An ATP-binding site is contributed by 51-58 (APPGYGKT). The region spanning 815 to 880 (ENKADALLTR…QATIEAERQG (66 aa)) is the HTH luxR-type domain. Residues 839–858 (NKQIATNMHVTEDAIKWHMR) constitute a DNA-binding region (H-T-H motif).

It participates in hydrocarbon metabolism; alkane degradation. In terms of biological role, this protein activates the expression of alkBFGHJKL operon in the presence of alkanes. The protein is HTH-type transcriptional regulator AlkS (alkS) of Ectopseudomonas oleovorans (Pseudomonas oleovorans).